Consider the following 251-residue polypeptide: MKKLVLLRHGESTWNKENRFTGWTDVDLTPKGAEEAHNSGRLLREAGFTFDIAYTSVLKRAIRTLWIVLDEMDQMWIPVESSWRLNERHYGALQGLNKLETAVAYGEEQVLIWRRSYDIRPPALTPDDPRYPGCDPRYRNLPKQDIPLTECLQDTVSRFLPYWRESIAPQVKSDKSVLITAHGNSLRALVMYLDNLSEGEIMELNIPTGIPLVYELDDGLKPIRSYYLGDQAKIEQAMQVVANQGKILPNL.

Substrate-binding positions include 8–15 (RHGESTWN), 21–22 (TG), Arg60, 87–90 (ERHY), Lys98, 114–115 (RR), and 183–184 (GN). Residue His9 is the Tele-phosphohistidine intermediate of the active site. Catalysis depends on Glu87, which acts as the Proton donor/acceptor.

The protein belongs to the phosphoglycerate mutase family. BPG-dependent PGAM subfamily. As to quaternary structure, homodimer.

It carries out the reaction (2R)-2-phosphoglycerate = (2R)-3-phosphoglycerate. The protein operates within carbohydrate degradation; glycolysis; pyruvate from D-glyceraldehyde 3-phosphate: step 3/5. Its function is as follows. Catalyzes the interconversion of 2-phosphoglycerate and 3-phosphoglycerate. The protein is 2,3-bisphosphoglycerate-dependent phosphoglycerate mutase 2 of Nitrosospira multiformis (strain ATCC 25196 / NCIMB 11849 / C 71).